The primary structure comprises 438 residues: Coenzyme A disulfide reductase (438 aa).

Gly-8–Glu-33 contacts FAD. Substrate contacts are provided by Thr-15, Gln-19, Arg-22, Ser-39, and Asn-42. The active-site Nucleophile is Cys-43. The active-site Redox-active is the Cys-43. Lys-71 is a binding site for substrate. Val-151–Asn-166 is a binding site for NADP(+). Thr-267 to Asp-277 contributes to the FAD binding site. Residue His-299 participates in substrate binding. An FAD-binding site is contributed by Tyr-419. Lys-427 serves as a coordination point for substrate.

The protein belongs to the class-III pyridine nucleotide-disulfide oxidoreductase family. In terms of assembly, homodimer. FAD is required as a cofactor.

The catalysed reaction is NADP(+) + 2 CoA = CoA-disulfide + NADPH + H(+). Functionally, catalyzes specifically the NADPH-dependent reduction of coenzyme A disulfide. This is Coenzyme A disulfide reductase from Staphylococcus aureus (strain JH1).